The chain runs to 386 residues: Chaperone protein DnaJ (386 aa).

Residues D6–G71 enclose the J domain. Residues G144–H226 form a CR-type zinc finger. Positions 157, 160, 174, 177, 200, 203, 214, and 217 each coordinate Zn(2+). CXXCXGXG motif repeat units follow at residues C157–G164, C174–G181, C200–G207, and C214–G221.

The protein belongs to the DnaJ family. As to quaternary structure, homodimer. The cofactor is Zn(2+).

It is found in the cytoplasm. In terms of biological role, participates actively in the response to hyperosmotic and heat shock by preventing the aggregation of stress-denatured proteins and by disaggregating proteins, also in an autonomous, DnaK-independent fashion. Unfolded proteins bind initially to DnaJ; upon interaction with the DnaJ-bound protein, DnaK hydrolyzes its bound ATP, resulting in the formation of a stable complex. GrpE releases ADP from DnaK; ATP binding to DnaK triggers the release of the substrate protein, thus completing the reaction cycle. Several rounds of ATP-dependent interactions between DnaJ, DnaK and GrpE are required for fully efficient folding. Also involved, together with DnaK and GrpE, in the DNA replication of plasmids through activation of initiation proteins. This Acetivibrio thermocellus (strain ATCC 27405 / DSM 1237 / JCM 9322 / NBRC 103400 / NCIMB 10682 / NRRL B-4536 / VPI 7372) (Clostridium thermocellum) protein is Chaperone protein DnaJ.